The chain runs to 221 residues: Protein-L-isoaspartate O-methyltransferase (221 aa).

The active site involves Ser-70.

Belongs to the methyltransferase superfamily. L-isoaspartyl/D-aspartyl protein methyltransferase family.

Its subcellular location is the cytoplasm. The enzyme catalyses [protein]-L-isoaspartate + S-adenosyl-L-methionine = [protein]-L-isoaspartate alpha-methyl ester + S-adenosyl-L-homocysteine. Its function is as follows. Catalyzes the methyl esterification of L-isoaspartyl residues in peptides and proteins that result from spontaneous decomposition of normal L-aspartyl and L-asparaginyl residues. It plays a role in the repair and/or degradation of damaged proteins. The chain is Protein-L-isoaspartate O-methyltransferase from Alkalilimnicola ehrlichii (strain ATCC BAA-1101 / DSM 17681 / MLHE-1).